Here is a 357-residue protein sequence, read N- to C-terminus: Undecaprenyl-phosphate alpha-N-acetylglucosaminyl 1-phosphate transferase (357 aa).

7 helical membrane-spanning segments follow: residues 40 to 60 (GAIP…FYLL), 64 to 84 (QMRL…IGMI), 124 to 144 (FQLT…IAAI), 183 to 203 (WSFA…GIPF), 209 to 229 (VFMG…ILLL), 238 to 258 (MNPV…IAIM), and 291 to 311 (FLLI…GEIF).

Belongs to the glycosyltransferase 4 family. WecA subfamily. Mg(2+) is required as a cofactor. The cofactor is Mn(2+).

It localises to the cell inner membrane. It catalyses the reaction di-trans,octa-cis-undecaprenyl phosphate + UDP-N-acetyl-alpha-D-glucosamine = N-acetyl-alpha-D-glucosaminyl-di-trans,octa-cis-undecaprenyl diphosphate + UMP. The protein operates within bacterial outer membrane biogenesis; LPS O-antigen biosynthesis. Catalyzes the transfer of the GlcNAc-1-phosphate moiety from UDP-GlcNAc onto the carrier lipid undecaprenyl phosphate (C55-P), yielding GlcNAc-pyrophosphoryl-undecaprenyl (GlcNAc-PP-C55). The polypeptide is Undecaprenyl-phosphate alpha-N-acetylglucosaminyl 1-phosphate transferase (Pasteurella multocida (strain Pm70)).